The sequence spans 168 residues: UPF0262 protein BRADO6636 (168 aa).

This sequence belongs to the UPF0262 family.

The chain is UPF0262 protein BRADO6636 from Bradyrhizobium sp. (strain ORS 278).